A 124-amino-acid chain; its full sequence is MPTVKQLIRNARQPIRNARKTAALKGCPQRRGTCARVYTINPKKPNSALRKVARVRLTSGFEITAYIPGIGHNLQEHSVVLVRGGRVKDLPGVRYRIIRGTLDAVAVKNRQQGRSKYGVKKPKK.

Belongs to the universal ribosomal protein uS12 family. As to quaternary structure, part of the 30S ribosomal subunit.

Its subcellular location is the plastid. The protein localises to the chloroplast. In terms of biological role, with S4 and S5 plays an important role in translational accuracy. Located at the interface of the 30S and 50S subunits. The polypeptide is Small ribosomal subunit protein uS12cz/uS12cy (rps12-A) (Agrostis stolonifera (Creeping bentgrass)).